The sequence spans 421 residues: ATP-dependent RNA helicase RhlB (421 aa).

The short motif at glutamine 9–alanine 37 is the Q motif element. The Helicase ATP-binding domain maps to leucine 40–valine 219. Alanine 53–threonine 60 lines the ATP pocket. The DEAD box signature appears at aspartate 165–aspartate 168. The 146-residue stretch at arginine 245–methionine 390 folds into the Helicase C-terminal domain. Residues leucine 393–glycine 421 form a disordered region. The span at arginine 403–proline 414 shows a compositional bias: low complexity.

The protein belongs to the DEAD box helicase family. RhlB subfamily. In terms of assembly, component of the RNA degradosome, which is a multiprotein complex involved in RNA processing and mRNA degradation.

Its subcellular location is the cytoplasm. It carries out the reaction ATP + H2O = ADP + phosphate + H(+). Functionally, DEAD-box RNA helicase involved in RNA degradation. Has RNA-dependent ATPase activity and unwinds double-stranded RNA. This is ATP-dependent RNA helicase RhlB from Citrobacter koseri (strain ATCC BAA-895 / CDC 4225-83 / SGSC4696).